The sequence spans 767 residues: 5-methyltetrahydropteroyltriglutamate--homocysteine methyltransferase (767 aa).

5-methyltetrahydropteroyltri-L-glutamate-binding positions include 17–20 (RELK) and lysine 117. L-homocysteine contacts are provided by residues 441-443 (IGS) and glutamate 494. Residues 441–443 (IGS) and glutamate 494 contribute to the L-methionine site. 5-methyltetrahydropteroyltri-L-glutamate-binding positions include 525-526 (RC) and tryptophan 571. Aspartate 609 lines the L-homocysteine pocket. Aspartate 609 provides a ligand contact to L-methionine. Glutamate 615 lines the 5-methyltetrahydropteroyltri-L-glutamate pocket. Zn(2+) contacts are provided by histidine 652, cysteine 654, and glutamate 676. Residue histidine 705 is the Proton donor of the active site. Cysteine 737 is a binding site for Zn(2+).

It belongs to the vitamin-B12 independent methionine synthase family. Zn(2+) serves as cofactor.

It catalyses the reaction 5-methyltetrahydropteroyltri-L-glutamate + L-homocysteine = tetrahydropteroyltri-L-glutamate + L-methionine. The protein operates within amino-acid biosynthesis; L-methionine biosynthesis via de novo pathway; L-methionine from L-homocysteine (MetE route): step 1/1. Its function is as follows. Catalyzes the transfer of a methyl group from 5-methyltetrahydrofolate to homocysteine resulting in methionine formation. In Bifidobacterium longum subsp. infantis (strain ATCC 15697 / DSM 20088 / JCM 1222 / NCTC 11817 / S12), this protein is 5-methyltetrahydropteroyltriglutamate--homocysteine methyltransferase.